Here is a 242-residue protein sequence, read N- to C-terminus: Venom nerve growth factor 1 (242 aa).

An N-terminal signal peptide occupies residues 1-18 (MSMLCYTLIIAFLIGIWA). Residues 19–125 (APKSEDNVPL…ALNRNIRSKR (107 aa)) constitute a propeptide that is removed on maturation. Residues 26-69 (VPLGSPATSDLSDTSCAQTHKALKTSRNTDQRHPAPKKAEDQEL) form a disordered region. Positions 31 to 43 (PATSDLSDTSCAQ) are enriched in polar residues. The segment covering 52–66 (RNTDQRHPAPKKAED) has biased composition (basic and acidic residues). 3 disulfides stabilise this stretch: Cys139-Cys203, Cys181-Cys231, and Cys191-Cys233. Asn147 carries an N-linked (GlcNAc...) asparagine glycan.

It belongs to the NGF-beta family. Homodimer; non-covalently linked. As to expression, expressed by the venom gland.

The protein resides in the secreted. Its function is as follows. Nerve growth factor is important for the development and maintenance of the sympathetic and sensory nervous systems. It stimulates division and differentiation of sympathetic and embryonic sensory neurons as well as basal forebrain cholinergic neurons in the brain. Its relevance in the snake venom is not clear. However, it has been shown to inhibit metalloproteinase-dependent proteolysis of platelet glycoprotein Ib alpha, suggesting a metalloproteinase inhibition to prevent metalloprotease autodigestion and/or protection against prey proteases. Binds a lipid between the two protein chains in the homodimer. The lipid-bound form promotes histamine relase from mouse mast cells, contrary to the lipid-free form. The sequence is that of Venom nerve growth factor 1 from Demansia vestigiata (Lesser black whip snake).